Here is a 220-residue protein sequence, read N- to C-terminus: Nucleolar protein 3 (220 aa).

Glycine 2 is lipidated: N-myristoyl glycine. Residues 4–95 (VQERPSETID…MPDPAWDWQH (92 aa)) enclose the CARD domain. Positions 20–70 (VETLQADSGLLLDALVARGVLTGPEYEALDALPDAERRVRRLLLLVQSKGE) are essential for interaction with BAX. The segment at 111 to 220 (GHWTPEAPSS…FQEEDESEDS (110 aa)) is disordered. Threonine 149 is subject to Phosphothreonine; by CK2. Residues 152–220 (EPELEAEATE…FQEEDESEDS (69 aa)) show a composition bias toward acidic residues.

As to quaternary structure, oligomerizes (via CARD doamin). Interacts (via CARD domain) with CASP2; inhibits CASP2 activity in a phosphorylation-dependent manner. Interacts with CASP8; decreases CASP8 activity in a mitochondria localization- and phosphorylation-dependent manner and this interaction is dissociated by calcium. Interacts with TFPT; translocates NOL3 into the nucleus and negatively regulated TFPT-induced cell death. Interacts directly (via CARD domain) with FAS and FADD (via DED domain); inhibits death-inducing signaling complex (DISC) assembly by inhibiting the increase in FAS-FADD binding induced by FAS activation. Interacts (via CARD domain) with BAX (via a C-terminal 33 residues); inhibits BAX activation and translocation and consequently cytochrome c release from mitochondria. Interacts with PPM1G; may dephosphorylate NOL3. Interacts (via CARD domain) with BBC3 (via BH3 domain); preventing the association of BBC3 with BCL2 and resulting in activation of CASP8. Interacts (via CARD domain) with BAD(via BH3 domain); preventing the association of BAD with BCL2. Interacts directly (via CARD domain) with TNFRSF1A; inhibits TNF-signaling pathway. In terms of processing, phosphorylation at Thr-149 is required for its antiapoptotic effect by blocking death-inducing signaling complex death-inducing signaling complex (DISC) activity through the control of interaction with CASP8. Phosphorylation at Thr-149 results in translocation to mitochondria and this translocation enables the binding to CASP8. Dephosphorylated at Thr-149 by calcineurin; doesn't inhibit the association between FADD and CASP8 and the consequent apoptosis. Post-translationally, polyubiquitinated by MDM2; promoting proteasomal-dependent degradation in response to apoptotic stimuli.

The protein localises to the cytoplasm. It is found in the mitochondrion. The protein resides in the sarcoplasmic reticulum. Its subcellular location is the membrane. In terms of biological role, apoptosis repressor that blocks multiple modes of cell death. Inhibits extrinsic apoptotic pathways through two different ways. Firstly by interacting with FAS and FADD upon FAS activation blocking death-inducing signaling complex (DISC) assembly. Secondly by interacting with CASP8 in a mitochondria localization- and phosphorylation-dependent manner, limiting the amount of soluble CASP8 available for DISC-mediated activation. Inhibits intrinsic apoptotic pathway in response to a wide range of stresses, through its interaction with BAX resulting in BAX inactivation, preventing mitochondrial dysfunction and release of pro-apoptotic factors. Inhibits calcium-mediated cell death by functioning as a cytosolic calcium buffer, dissociating its interaction with CASP8 and maintaining calcium homeostasis. Negatively regulates oxidative stress-induced apoptosis by phosphorylation-dependent suppression of the mitochondria-mediated intrinsic pathway, by blocking CASP2 activation and BAX translocation. Negatively regulates hypoxia-induced apoptosis in part by inhibiting the release of cytochrome c from mitochondria in a caspase-independent manner. Also inhibits TNF-induced necrosis by preventing TNF-signaling pathway through TNFRSF1A interaction abrogating the recruitment of RIPK1 to complex I. Finally through its role as apoptosis repressor, promotes vascular remodeling through inhibition of apoptosis and stimulation of proliferation, in response to hypoxia. Inhibits too myoblast differentiation through caspase inhibition. The polypeptide is Nucleolar protein 3 (Nol3) (Mus musculus (Mouse)).